The chain runs to 387 residues: Early growth response protein 3 (387 aa).

The disordered stretch occupies residues 241-283 (PGFGSLPQPPLTLKPIRPRKYPNRPSKTPLHERPHACPAEGCD). Over residues 269-283 (PLHERPHACPAEGCD) the composition is skewed to basic and acidic residues. C2H2-type zinc fingers lie at residues 275–299 (HACPAEGCDRRFSRSDELTRHLRIH), 305–327 (FQCRICMRSFSRSDHLTTHIRTH), and 333–355 (FACEFCGRKFARSDERKRHAKIH). The disordered stretch occupies residues 348 to 387 (RKRHAKIHLKQKEKKAEKGGAPSASSAPPVSLAPVVTTCA). A compositionally biased stretch (basic residues) spans 350–360 (RHAKIHLKQKE). Over residues 368–387 (APSASSAPPVSLAPVVTTCA) the composition is skewed to low complexity.

Belongs to the EGR C2H2-type zinc-finger protein family.

It localises to the nucleus. In terms of biological role, probable transcription factor involved in muscle spindle development. The polypeptide is Early growth response protein 3 (EGR3) (Homo sapiens (Human)).